The following is a 2200-amino-acid chain: Non-reducing polyketide synthase tpeB (2200 aa).

In terms of domain architecture, Starter acyltransferase (SAT) spans 16-255 (FFGDQTVDTL…MDLPLGTPAH (240 aa)). The region spanning 382–815 (SNMIAIVGQS…GGNNCVLLEE (434 aa)) is the Ketosynthase family 3 (KS3) domain. Active-site for beta-ketoacyl synthase activity residues include Cys554, His690, and His729. Residues 914–1202 (VFAFTGQGSQ…VLNSFIKATL (289 aa)) form the Malonyl-CoA:ACP transacylase (MAT) domain. Positions 1296 to 1621 (TASLQRVREE…TKRILTTILG (326 aa)) are product template (PT) domain. The N-terminal hotdog fold stretch occupies residues 1300–1433 (QRVREERIQG…CKIRFESKAD (134 aa)). Residues 1300–1617 (QRVREERIQG…FQRLTKRILT (318 aa)) enclose the PKS/mFAS DH domain. His1332 serves as the catalytic Proton acceptor; for dehydratase activity. The interval 1462-1617 (NGHKLPKPVV…FQRLTKRILT (156 aa)) is C-terminal hotdog fold. The active-site Proton donor; for dehydratase activity is Asp1522. Residues 1625-1652 (DHHNSNEVRNGNATTTHTNPPAHATTQS) form a disordered region. Residues 1636 to 1650 (NATTTHTNPPAHATT) are compositionally biased toward low complexity. 2 consecutive Carrier domains span residues 1671 to 1748 (TVGE…AELP) and 1791 to 1865 (ANYA…GPNT). O-(pantetheine 4'-phosphoryl)serine is present on residues Ser1708 and Ser1825. The thioesterase (TE) domain stretch occupies residues 1931–2173 (MFFLPDGTGY…TVPCDHLSIM (243 aa)).

Pantetheine 4'-phosphate serves as cofactor.

Its pathway is secondary metabolite biosynthesis. Non-reducing polyketide synthase; part of the gene cluster that mediates the biosynthesis of polyesters containing 2,4-dihydroxy-6-(2-hydroxypropyl)benzoate and 3-hydroxybutyrate moieties, such as talapolyester G, 15G256beta and 15G256beta-2; as well as to oxidized derivatives such as 15G256alpha. The biosynthesis of the polyesters probably starts with the formation of the diketide 3-hydroxybutyryl-S-ACP catalyzed by the partially reducing polyketide synthase tpeA. The acceptance of 3-hydroxybutyryl by the non-reducing polyketide synthase tpeB would initiate further elongation and cyclization, catalyzed by KS and PT, respectively, to form 2,4-dihydroxy-6-(2-hydroxyn-propyl)benzoyl-S-ACP intermediate. The TE domain could catalyze lactonization at this step to yield 6-hydroxymellein as a derailment product. The polyesterification process maybe occurs when additional molecules of 3-hydroxybutyryl are transferred to tpeB. Following the first esterification step, an intramolecular cyclization catalyzed by the TE domain of tpeB would give talarodioxadione 1, whereas the ethyl esterification of talapolyester G perhaps happens spontaneously. Further oxidation by the cytochrome P450 monooxygenase tpeC then leads to the formation of oxidized derivatives. This is Non-reducing polyketide synthase tpeB from Talaromyces stipitatus (strain ATCC 10500 / CBS 375.48 / QM 6759 / NRRL 1006) (Penicillium stipitatum).